A 545-amino-acid polypeptide reads, in one-letter code: ATP synthase subunit alpha (545 aa).

Residue G174–T181 participates in ATP binding.

Belongs to the ATPase alpha/beta chains family. In terms of assembly, F-type ATPases have 2 components, CF(1) - the catalytic core - and CF(0) - the membrane proton channel. CF(1) has five subunits: alpha(3), beta(3), gamma(1), delta(1), epsilon(1). CF(0) has three main subunits: a(1), b(2) and c(9-12). The alpha and beta chains form an alternating ring which encloses part of the gamma chain. CF(1) is attached to CF(0) by a central stalk formed by the gamma and epsilon chains, while a peripheral stalk is formed by the delta and b chains.

The protein resides in the cell membrane. The enzyme catalyses ATP + H2O + 4 H(+)(in) = ADP + phosphate + 5 H(+)(out). Produces ATP from ADP in the presence of a proton gradient across the membrane. The alpha chain is a regulatory subunit. The chain is ATP synthase subunit alpha from Cutibacterium acnes (strain DSM 16379 / KPA171202) (Propionibacterium acnes).